A 470-amino-acid chain; its full sequence is Glutamate--tRNA ligase (470 aa).

The 'HIGH' region signature appears at 9–19 (PSPTGFLHVGG). Positions 236–240 (RLSKR) match the 'KMSKS' region motif. K239 contacts ATP.

It belongs to the class-I aminoacyl-tRNA synthetase family. Glutamate--tRNA ligase type 1 subfamily. Monomer.

It localises to the cytoplasm. The enzyme catalyses tRNA(Glu) + L-glutamate + ATP = L-glutamyl-tRNA(Glu) + AMP + diphosphate. In terms of biological role, catalyzes the attachment of glutamate to tRNA(Glu) in a two-step reaction: glutamate is first activated by ATP to form Glu-AMP and then transferred to the acceptor end of tRNA(Glu). The polypeptide is Glutamate--tRNA ligase (Legionella pneumophila (strain Lens)).